We begin with the raw amino-acid sequence, 40 residues long: Sauvagin (40 aa).

At glutamine 1 the chain carries Pyrrolidone carboxylic acid. Isoleucine 40 is modified (isoleucine amide).

It belongs to the sauvagine/corticotropin-releasing factor/urotensin I family.

The protein resides in the secreted. Its function is as follows. Hypotensive and diuretic peptide. This is Sauvagin from Phyllomedusa sauvagei (Sauvage's leaf frog).